Reading from the N-terminus, the 179-residue chain is Large ribosomal subunit protein uL6 (179 aa).

This sequence belongs to the universal ribosomal protein uL6 family. As to quaternary structure, part of the 50S ribosomal subunit.

Its function is as follows. This protein binds to the 23S rRNA, and is important in its secondary structure. It is located near the subunit interface in the base of the L7/L12 stalk, and near the tRNA binding site of the peptidyltransferase center. This Syntrophomonas wolfei subsp. wolfei (strain DSM 2245B / Goettingen) protein is Large ribosomal subunit protein uL6.